We begin with the raw amino-acid sequence, 66 residues long: Putative transmembrane protein ORF66 (66 aa).

At 1–6 (MSDVDD) the chain is on the cytoplasmic side. A helical transmembrane segment spans residues 7 to 27 (TIVDSIAIVGAILIGIFLIVV). Residues 28–39 (SVSNTSLFNNTE) lie on the Extracellular side of the membrane. A helical transmembrane segment spans residues 40–60 (YDSMINSVLVIISSVIAYTLG). The Cytoplasmic portion of the chain corresponds to 61–66 (KRRSKS).

The protein localises to the host membrane. The sequence is that of Putative transmembrane protein ORF66 from Acidianus filamentous virus 2 (isolate Italy/Pozzuoli) (AFV-2).